Here is a 99-residue protein sequence, read N- to C-terminus: Late cornified envelope protein 4A (99 aa).

The tract at residues 78-99 (CYGSGSGQQSGGSGCCSGGGCC) is disordered. A compositionally biased stretch (gly residues) spans 81–99 (SGSGQQSGGSGCCSGGGCC).

The protein belongs to the LCE family. Interacts with CYSRT1; the interaction is direct. In terms of tissue distribution, skin-specific. Expression was readily detected in adult trunk skin, adult arm skin, fetal skin, penal skin, vulva, esophagus and tongue. Not expressed in the cervix, rectum, lung, colon, or placenta.

Its function is as follows. Precursors of the cornified envelope of the stratum corneum. This is Late cornified envelope protein 4A (LCE4A) from Homo sapiens (Human).